A 153-amino-acid polypeptide reads, in one-letter code: Ribonuclease VapC6 (153 aa).

Residues valine 6–lysine 152 form the PINc domain. Residues aspartate 9 and aspartate 120 each coordinate Mg(2+).

It belongs to the PINc/VapC protein family. It depends on Mg(2+) as a cofactor.

Functionally, toxic component of a type II toxin-antitoxin (TA) system. An RNase. The protein is Ribonuclease VapC6 of Methanocaldococcus jannaschii (strain ATCC 43067 / DSM 2661 / JAL-1 / JCM 10045 / NBRC 100440) (Methanococcus jannaschii).